The following is a 225-amino-acid chain: Thymidylate kinase (225 aa).

ATP is bound at residue 9-16; sequence GIEGCGKT.

This sequence belongs to the thymidylate kinase family.

The enzyme catalyses dTMP + ATP = dTDP + ADP. Phosphorylation of dTMP to form dTDP in both de novo and salvage pathways of dTTP synthesis. In Geobacter sp. (strain M21), this protein is Thymidylate kinase.